Consider the following 554-residue polypeptide: CTP synthase (554 aa).

Residues 1 to 265 (MTPLIFVTGG…DEIVIDQFKL (265 aa)) form an amidoligase domain region. Ser-13 serves as a coordination point for CTP. Residue Ser-13 coordinates UTP. ATP contacts are provided by residues 14 to 19 (SLGKGI) and Asp-71. Mg(2+) is bound by residues Asp-71 and Glu-139. Residues 146-148 (DIE), 186-191 (KTKPTQ), and Lys-222 contribute to the CTP site. UTP contacts are provided by residues 186-191 (KTKPTQ) and Lys-222. The 254-residue stretch at 292 to 545 (TIAVVGKYVD…VKAARARKAG (254 aa)) folds into the Glutamine amidotransferase type-1 domain. Position 353 (Gly-353) interacts with L-glutamine. The active-site Nucleophile; for glutamine hydrolysis is Cys-380. Residues 381 to 384 (YGMQ), Glu-404, and Arg-471 contribute to the L-glutamine site. Catalysis depends on residues His-518 and Glu-520.

It belongs to the CTP synthase family. As to quaternary structure, homotetramer.

The enzyme catalyses UTP + L-glutamine + ATP + H2O = CTP + L-glutamate + ADP + phosphate + 2 H(+). It catalyses the reaction L-glutamine + H2O = L-glutamate + NH4(+). It carries out the reaction UTP + NH4(+) + ATP = CTP + ADP + phosphate + 2 H(+). It participates in pyrimidine metabolism; CTP biosynthesis via de novo pathway; CTP from UDP: step 2/2. Its activity is regulated as follows. Allosterically activated by GTP, when glutamine is the substrate; GTP has no effect on the reaction when ammonia is the substrate. The allosteric effector GTP functions by stabilizing the protein conformation that binds the tetrahedral intermediate(s) formed during glutamine hydrolysis. Inhibited by the product CTP, via allosteric rather than competitive inhibition. Its function is as follows. Catalyzes the ATP-dependent amination of UTP to CTP with either L-glutamine or ammonia as the source of nitrogen. Regulates intracellular CTP levels through interactions with the four ribonucleotide triphosphates. The chain is CTP synthase from Xylella fastidiosa (strain 9a5c).